We begin with the raw amino-acid sequence, 370 residues long: Holliday junction branch migration complex subunit RuvB (370 aa).

A disordered region spans residues 1-53 (MAILSSQKQPLEPEPSKNPQSVQQPGLPPSTPEQGLLTAEVSPEERLSRTDDI). The tract at residues 13 to 214 (PEPSKNPQSV…FGLIQRLRFY (202 aa)) is large ATPase domain (RuvB-L). Basic and acidic residues predominate over residues 43 to 53 (PEERLSRTDDI). ATP contacts are provided by residues Ile-53, Arg-54, Gly-95, Lys-98, Thr-99, Thr-100, 161–163 (EDF), Arg-204, Tyr-214, and Arg-251. Thr-99 is a Mg(2+) binding site. A small ATPAse domain (RuvB-S) region spans residues 215–285 (EPEELSQIIL…IASEALQLFN (71 aa)). Positions 288-370 (PCGLDWTDRR…TPPDGQLSLL (83 aa)) are head domain (RuvB-H). Residues Arg-343 and Arg-348 each coordinate DNA.

Belongs to the RuvB family. In terms of assembly, homohexamer. Forms an RuvA(8)-RuvB(12)-Holliday junction (HJ) complex. HJ DNA is sandwiched between 2 RuvA tetramers; dsDNA enters through RuvA and exits via RuvB. An RuvB hexamer assembles on each DNA strand where it exits the tetramer. Each RuvB hexamer is contacted by two RuvA subunits (via domain III) on 2 adjacent RuvB subunits; this complex drives branch migration. In the full resolvosome a probable DNA-RuvA(4)-RuvB(12)-RuvC(2) complex forms which resolves the HJ.

It is found in the cytoplasm. The enzyme catalyses ATP + H2O = ADP + phosphate + H(+). In terms of biological role, the RuvA-RuvB-RuvC complex processes Holliday junction (HJ) DNA during genetic recombination and DNA repair, while the RuvA-RuvB complex plays an important role in the rescue of blocked DNA replication forks via replication fork reversal (RFR). RuvA specifically binds to HJ cruciform DNA, conferring on it an open structure. The RuvB hexamer acts as an ATP-dependent pump, pulling dsDNA into and through the RuvAB complex. RuvB forms 2 homohexamers on either side of HJ DNA bound by 1 or 2 RuvA tetramers; 4 subunits per hexamer contact DNA at a time. Coordinated motions by a converter formed by DNA-disengaged RuvB subunits stimulates ATP hydrolysis and nucleotide exchange. Immobilization of the converter enables RuvB to convert the ATP-contained energy into a lever motion, pulling 2 nucleotides of DNA out of the RuvA tetramer per ATP hydrolyzed, thus driving DNA branch migration. The RuvB motors rotate together with the DNA substrate, which together with the progressing nucleotide cycle form the mechanistic basis for DNA recombination by continuous HJ branch migration. Branch migration allows RuvC to scan DNA until it finds its consensus sequence, where it cleaves and resolves cruciform DNA. The sequence is that of Holliday junction branch migration complex subunit RuvB from Cyanothece sp. (strain PCC 7425 / ATCC 29141).